The chain runs to 440 residues: Histidinol dehydrogenase (440 aa).

Positions 134, 196, and 219 each coordinate NAD(+). Substrate-binding residues include serine 242, glutamine 264, and histidine 267. Residues glutamine 264 and histidine 267 each contribute to the Zn(2+) site. Active-site proton acceptor residues include glutamate 332 and histidine 333. Histidine 333, aspartate 366, glutamate 420, and histidine 425 together coordinate substrate. Residue aspartate 366 participates in Zn(2+) binding. Zn(2+) is bound at residue histidine 425.

Belongs to the histidinol dehydrogenase family. Requires Zn(2+) as cofactor.

The catalysed reaction is L-histidinol + 2 NAD(+) + H2O = L-histidine + 2 NADH + 3 H(+). Its pathway is amino-acid biosynthesis; L-histidine biosynthesis; L-histidine from 5-phospho-alpha-D-ribose 1-diphosphate: step 9/9. Functionally, catalyzes the sequential NAD-dependent oxidations of L-histidinol to L-histidinaldehyde and then to L-histidine. The protein is Histidinol dehydrogenase of Prochlorococcus marinus (strain SARG / CCMP1375 / SS120).